A 468-amino-acid polypeptide reads, in one-letter code: Plant UBX domain-containing protein 7 (468 aa).

Met1 carries the post-translational modification N-acetylmethionine. One can recognise a UBA-like domain in the interval 7–48; the sequence is SGDQQRLVSSFLEIAVGQTAETARQFLQATSWKLEEAIQLFY. 2 disordered regions span residues 138–168 and 299–329; these read KSPG…SAPR and HFAS…KDEE. The span at 150 to 166 shows a compositional bias: low complexity; it reads SSASASASASASESASA. A UIM domain is found at 328–347; it reads EEEEELQRALAASLEDNNMK. Residues 385 to 466 form the UBX domain; sequence DRSLQCRVGI…GVANSMISAT (82 aa).

In terms of assembly, interacts with CDC48A via its UBX domain and with ubiquitin via its N-terminal UBA-like domain. As to expression, expressed broadly in sporophyte and gametophyte cells.

It localises to the nucleus. Functionally, acts as a bridge between CDC48A and ubiquitin, suggesting a role in targeted protein degradation. The chain is Plant UBX domain-containing protein 7 from Arabidopsis thaliana (Mouse-ear cress).